Reading from the N-terminus, the 339-residue chain is Protoheme IX farnesyltransferase (339 aa).

A disordered region spans residues Met1 to Arg27. Transmembrane regions (helical) follow at residues Ile45 to Pro65, Gly67 to Leu87, Ala117 to Val136, Ser140 to Leu159, Gln165 to Val185, Trp191 to Leu211, Val236 to Pro256, Leu257 to Val277, and Pro309 to Val329.

Belongs to the UbiA prenyltransferase family. Protoheme IX farnesyltransferase subfamily.

The protein localises to the cell membrane. It catalyses the reaction heme b + (2E,6E)-farnesyl diphosphate + H2O = Fe(II)-heme o + diphosphate. The protein operates within porphyrin-containing compound metabolism; heme O biosynthesis; heme O from protoheme: step 1/1. In terms of biological role, converts heme B (protoheme IX) to heme O by substitution of the vinyl group on carbon 2 of heme B porphyrin ring with a hydroxyethyl farnesyl side group. The polypeptide is Protoheme IX farnesyltransferase (Kineococcus radiotolerans (strain ATCC BAA-149 / DSM 14245 / SRS30216)).